We begin with the raw amino-acid sequence, 459 residues long: uncharacterized protein (459 aa).

Residues P7–E65 form the TRAM domain. [4Fe-4S] cluster contacts are provided by C78, C82, C85, and C164. S-adenosyl-L-methionine-binding residues include Q288, Y317, E338, and D386. The active-site Nucleophile is the C413.

Belongs to the class I-like SAM-binding methyltransferase superfamily. RNA M5U methyltransferase family.

This is an uncharacterized protein from Oceanobacillus iheyensis (strain DSM 14371 / CIP 107618 / JCM 11309 / KCTC 3954 / HTE831).